The sequence spans 127 residues: Aspartate 1-decarboxylase (127 aa).

The Schiff-base intermediate with substrate; via pyruvic acid role is filled by serine 25. Serine 25 is modified (pyruvic acid (Ser)). Threonine 57 contributes to the substrate binding site. Tyrosine 58 functions as the Proton donor in the catalytic mechanism. A substrate-binding site is contributed by 73 to 75 (GAA).

It belongs to the PanD family. As to quaternary structure, heterooctamer of four alpha and four beta subunits. It depends on pyruvate as a cofactor. In terms of processing, is synthesized initially as an inactive proenzyme, which is activated by self-cleavage at a specific serine bond to produce a beta-subunit with a hydroxyl group at its C-terminus and an alpha-subunit with a pyruvoyl group at its N-terminus.

It localises to the cytoplasm. The enzyme catalyses L-aspartate + H(+) = beta-alanine + CO2. It participates in cofactor biosynthesis; (R)-pantothenate biosynthesis; beta-alanine from L-aspartate: step 1/1. Catalyzes the pyruvoyl-dependent decarboxylation of aspartate to produce beta-alanine. This is Aspartate 1-decarboxylase from Staphylococcus aureus (strain MSSA476).